We begin with the raw amino-acid sequence, 159 residues long: MADETDRHFDVQEKIRKYEEFLDQRLAKDLEAVFKSQDEIVAKITEYTQLKSSIEQIQKTDLKGKDLRSRVDLGCNFFCQASVPDPSRIFIAVGYGFFVEFTLSEALNFIEKKLAHLQHSVDKLGKDAAKIKAHMKLVLGGLQELQGLNQLSHRMHYPV.

This sequence belongs to the UXT family.

This is Protein UXT homolog from Nematostella vectensis (Starlet sea anemone).